A 392-amino-acid chain; its full sequence is Spermatogenesis associated 6-like protein (392 aa).

Phosphoserine is present on residues Ser-260 and Ser-263. Positions 286–301 are enriched in low complexity; it reads SCLDSSQFGKSSSSKQ. The tract at residues 286–305 is disordered; that stretch reads SCLDSSQFGKSSSSKQGDAD.

The protein belongs to the SPATA6 family.

In Homo sapiens (Human), this protein is Spermatogenesis associated 6-like protein (SPATA6L).